The following is a 517-amino-acid chain: Serine carboxypeptidase ctsa-3.2 (517 aa).

The signal sequence occupies residues 1–21 (MWWTSLVFSVLLFDLIFISNC). Serine 172 is an active-site residue. Asparagine 269 is a glycosylation site (N-linked (GlcNAc...) asparagine). Active-site residues include aspartate 418 and histidine 485.

This sequence belongs to the peptidase S10 family.

This chain is Serine carboxypeptidase ctsa-3.2, found in Caenorhabditis elegans.